Here is a 121-residue protein sequence, read N- to C-terminus: uncharacterized protein (121 aa).

The next 3 helical transmembrane spans lie at 1–21, 55–75, and 92–112; these read MILWGGSGGYLVIILYTIMPV, LKYINAFKGLLFHVCLHFCSI, and LFFKAAVISGIFRYTIPIHFL.

It is found in the membrane. This is an uncharacterized protein from Saccharomyces cerevisiae (strain ATCC 204508 / S288c) (Baker's yeast).